The sequence spans 184 residues: Inosine triphosphate pyrophosphatase (184 aa).

10 to 15 (TGNVKK) serves as a coordination point for ITP. Residue glutamate 37 participates in Mg(2+) binding. ITP contacts are provided by residues lysine 49, 65-66 (DT), lysine 82, 141-144 (FGWD), lysine 164, and 169-170 (HR).

It belongs to the HAM1 NTPase family. Homodimer. Mg(2+) is required as a cofactor. Mn(2+) serves as cofactor.

The protein localises to the cytoplasm. The enzyme catalyses ITP + H2O = IMP + diphosphate + H(+). It catalyses the reaction dITP + H2O = dIMP + diphosphate + H(+). It carries out the reaction XTP + H2O = XMP + diphosphate + H(+). Its function is as follows. Pyrophosphatase that hydrolyzes non-canonical purine nucleotides such as inosine triphosphate (ITP), deoxyinosine triphosphate (dITP) or xanthosine 5'-triphosphate (XTP) to their respective monophosphate derivatives. The enzyme does not distinguish between the deoxy- and ribose forms. Probably excludes non-canonical purines from RNA and DNA precursor pools, thus preventing their incorporation into RNA and DNA and avoiding chromosomal lesions. The polypeptide is Inosine triphosphate pyrophosphatase (Caenorhabditis elegans).